A 679-amino-acid chain; its full sequence is UvrABC system protein B (679 aa).

Residues 25–176 (EGVNGGERYQ…NLRGSLRDLV (152 aa)) enclose the Helicase ATP-binding domain. Residue 38–45 (GATGTGKT) participates in ATP binding. The Beta-hairpin motif lies at 91–114 (YYDYYQPEAYVPVSDTYIAKTASI). Residues 429–591 (QVDDLLGEIR…ITPTAAGKKA (163 aa)) enclose the Helicase C-terminal domain. The UVR domain occupies 638–673 (PELIDQLELKMKESAKKLDFEEAANLRDRIKKLRQK).

The protein belongs to the UvrB family. As to quaternary structure, forms a heterotetramer with UvrA during the search for lesions. Interacts with UvrC in an incision complex.

It localises to the cytoplasm. In terms of biological role, the UvrABC repair system catalyzes the recognition and processing of DNA lesions. A damage recognition complex composed of 2 UvrA and 2 UvrB subunits scans DNA for abnormalities. Upon binding of the UvrA(2)B(2) complex to a putative damaged site, the DNA wraps around one UvrB monomer. DNA wrap is dependent on ATP binding by UvrB and probably causes local melting of the DNA helix, facilitating insertion of UvrB beta-hairpin between the DNA strands. Then UvrB probes one DNA strand for the presence of a lesion. If a lesion is found the UvrA subunits dissociate and the UvrB-DNA preincision complex is formed. This complex is subsequently bound by UvrC and the second UvrB is released. If no lesion is found, the DNA wraps around the other UvrB subunit that will check the other stand for damage. The chain is UvrABC system protein B from Synechococcus sp. (strain CC9311).